The chain runs to 72 residues: Heat-stable enterotoxin A2 (72 aa).

The signal sequence occupies residues 1-19 (MKKSILFIFLSVLSFSPFA). A propeptide spanning residues 20-53 (QDAKPAGSSKEKITLESKKCNIVKKNNESSPESM) is cleaved from the precursor. Cystine bridges form between C59/C64, C60/C68, and C63/C71.

It belongs to the heat-stable enterotoxin family.

The protein resides in the secreted. Functionally, toxin which activates the particulate form of guanylate cyclase and increases cyclic GMP levels within the host intestinal epithelial cells. The protein is Heat-stable enterotoxin A2 (sta2) of Escherichia coli.